We begin with the raw amino-acid sequence, 400 residues long: Elongation factor Tu (400 aa).

The tr-type G domain occupies Lys10–Glu209. Residues Gly19–Thr26 form a G1 region. Gly19–Thr26 is a binding site for GTP. Mg(2+) is bound at residue Thr26. The tract at residues Gly60–Asn64 is G2. The tract at residues Asp81–Gly84 is G3. Residues Asp81 to His85 and Asn136 to Asp139 each bind GTP. Residues Asn136–Asp139 form a G4 region. The tract at residues Ser174–Leu176 is G5.

Belongs to the TRAFAC class translation factor GTPase superfamily. Classic translation factor GTPase family. EF-Tu/EF-1A subfamily. As to quaternary structure, monomer.

It localises to the cytoplasm. It carries out the reaction GTP + H2O = GDP + phosphate + H(+). In terms of biological role, GTP hydrolase that promotes the GTP-dependent binding of aminoacyl-tRNA to the A-site of ribosomes during protein biosynthesis. The chain is Elongation factor Tu from Heliobacterium modesticaldum (strain ATCC 51547 / Ice1).